The primary structure comprises 296 residues: NAD kinase (296 aa).

Catalysis depends on aspartate 73, which acts as the Proton acceptor. Residues 73–74 (DG), lysine 78, 151–152 (NE), arginine 178, aspartate 180, and 191–196 (TAHAMS) each bind NAD(+).

Belongs to the NAD kinase family. A divalent metal cation is required as a cofactor.

The protein resides in the cytoplasm. The catalysed reaction is NAD(+) + ATP = ADP + NADP(+) + H(+). In terms of biological role, involved in the regulation of the intracellular balance of NAD and NADP, and is a key enzyme in the biosynthesis of NADP. Catalyzes specifically the phosphorylation on 2'-hydroxyl of the adenosine moiety of NAD to yield NADP. This Francisella tularensis subsp. tularensis (strain FSC 198) protein is NAD kinase.